Consider the following 500-residue polypeptide: Glucose-6-phosphate 1-dehydrogenase (500 aa).

NADP(+) is bound by residues 18-25 (GASGDLSK), R52, and K155. Residues K155, 185 to 189 (HYLGK), E223, and D242 contribute to the D-glucose 6-phosphate site. The active-site Proton acceptor is H247. Residue K338 participates in NADP(+) binding. D-glucose 6-phosphate is bound at residue K341. Residues K347, R351, and R373 each contribute to the NADP(+) site. Residue Q375 participates in D-glucose 6-phosphate binding. Residues 381 to 383 (YFK), 401 to 403 (DLT), and Y483 contribute to the NADP(+) site.

It belongs to the glucose-6-phosphate dehydrogenase family.

The protein resides in the cytoplasm. Its subcellular location is the cytosol. The catalysed reaction is D-glucose 6-phosphate + NADP(+) = 6-phospho-D-glucono-1,5-lactone + NADPH + H(+). It participates in carbohydrate degradation; pentose phosphate pathway; D-ribulose 5-phosphate from D-glucose 6-phosphate (oxidative stage): step 1/3. In terms of biological role, catalyzes the rate-limiting step of the oxidative pentose-phosphate pathway, which represents a route for the dissimilation of carbohydrates besides glycolysis. The main function of this enzyme is to provide reducing power (NADPH) and pentose phosphates for fatty acid and nucleic acid synthesis. In Schizosaccharomyces pombe (strain 972 / ATCC 24843) (Fission yeast), this protein is Glucose-6-phosphate 1-dehydrogenase.